A 492-amino-acid chain; its full sequence is Serine incorporator 4 (492 aa).

Helical transmembrane passes span 59-79 (YILL…KTVV), 113-133 (AVYR…VLLV), 148-168 (SFWS…FCIP), 179-199 (IGIC…TAFA), 219-239 (GVSL…VLLF), 254-274 (LLSL…APCI), 281-301 (SGLL…FSAL), 330-350 (IPDT…VLFA), 421-441 (GFHF…TNWF), and 464-484 (VASC…PLLA).

It belongs to the TDE1 family.

The protein resides in the membrane. Incorporates a polar amino acid serine into membranes and facilitates the synthesis of two serine-derived lipids, phosphatidylserine and sphingolipids. In Mus musculus (Mouse), this protein is Serine incorporator 4 (Serinc4).